The chain runs to 389 residues: Alanine racemase (389 aa).

The active-site Proton acceptor; specific for D-alanine is Lys48. Residue Lys48 is modified to N6-(pyridoxal phosphate)lysine. Residue Arg144 participates in substrate binding. The active-site Proton acceptor; specific for L-alanine is Tyr281. Met329 lines the substrate pocket.

This sequence belongs to the alanine racemase family. The cofactor is pyridoxal 5'-phosphate.

The catalysed reaction is L-alanine = D-alanine. It functions in the pathway amino-acid biosynthesis; D-alanine biosynthesis; D-alanine from L-alanine: step 1/1. In terms of biological role, catalyzes the interconversion of L-alanine and D-alanine. May also act on other amino acids. This is Alanine racemase (alr) from Leptospira interrogans serogroup Icterohaemorrhagiae serovar copenhageni (strain Fiocruz L1-130).